We begin with the raw amino-acid sequence, 196 residues long: 7-methyl-GTP pyrophosphatase (196 aa).

Aspartate 69 serves as the catalytic Proton acceptor.

The protein belongs to the Maf family. YceF subfamily. A divalent metal cation is required as a cofactor.

It localises to the cytoplasm. The catalysed reaction is N(7)-methyl-GTP + H2O = N(7)-methyl-GMP + diphosphate + H(+). Its function is as follows. Nucleoside triphosphate pyrophosphatase that hydrolyzes 7-methyl-GTP (m(7)GTP). May have a dual role in cell division arrest and in preventing the incorporation of modified nucleotides into cellular nucleic acids. This chain is 7-methyl-GTP pyrophosphatase, found in Photorhabdus laumondii subsp. laumondii (strain DSM 15139 / CIP 105565 / TT01) (Photorhabdus luminescens subsp. laumondii).